Consider the following 179-residue polypeptide: Inner membrane-spanning protein YciB (179 aa).

The next 6 helical transmembrane spans lie at Phe3–Tyr23, Thr24–His44, Pro49–His69, Trp76–Trp96, Leu121–Phe141, and Phe149–Leu169.

This sequence belongs to the YciB family.

Its subcellular location is the cell inner membrane. In terms of biological role, plays a role in cell envelope biogenesis, maintenance of cell envelope integrity and membrane homeostasis. This chain is Inner membrane-spanning protein YciB, found in Cupriavidus taiwanensis (strain DSM 17343 / BCRC 17206 / CCUG 44338 / CIP 107171 / LMG 19424 / R1) (Ralstonia taiwanensis (strain LMG 19424)).